Here is a 1035-residue protein sequence, read N- to C-terminus: Tyrosine-protein kinase-like otk (1035 aa).

An N-terminal signal peptide occupies residues 1–23 (MDMDVMMISMCILASTLMAPGWA). 5 consecutive Ig-like C2-type domains span residues 24–109 (STSG…REAS), 110–199 (PPAK…RVMS), 251–365 (PEDL…APLN), 368–464 (PGLL…VSIN), and 469–559 (PKFS…VQLV). Over 24–582 (STSGFLRVPQ…GGDGFLVTRA (559 aa)) the chain is Extracellular. Disulfide bonds link Cys47–Cys96, Cys138–Cys188, Cys276–Cys354, Cys399–Cys448, and Cys491–Cys543. 6 N-linked (GlcNAc...) asparagine glycosylation sites follow: Asn336, Asn418, Asn430, Asn445, Asn513, and Asn525. The chain crosses the membrane as a helical span at residues 583-603 (VLITMTVALAYIVLVVGLMLW). At 604-1035 (CRYRRQARKA…SKAMQSVAEK (432 aa)) the chain is on the cytoplasmic side. Disordered regions lie at residues 623–683 (AGGD…KSVY) and 721–775 (AQSD…KEEE). The span at 658–676 (KSNGDAQKSDDTACSQQSR) shows a compositional bias: polar residues. Ser681 is modified (phosphoserine). In terms of domain architecture, Protein kinase; inactive spans 693–1029 (LSELLQIGRG…QLGSALSKAM (337 aa)). Basic and acidic residues predominate over residues 723 to 734 (SDKDADTEKQHS). The span at 766-775 (DDIEEIKEEE) shows a compositional bias: acidic residues.

It belongs to the protein kinase superfamily. Tyr protein kinase family. Insulin receptor subfamily. Interacts with plexA; component of a receptor complex that mediates the repulsive signaling in response to Semaphorin ligands.

The protein resides in the cell membrane. Functionally, acts as a calcium-dependent, homophilic cell adhesion molecule that regulates neural recognition during the development of the nervous system. Component of the repulsive Plexin signaling response to regulate motor axon guidance at the embryonic stage. Also component of a receptor complex that is required in the adult visual system to innervate the lamina layer; specific targeting of R1-R6 axons. The sequence is that of Tyrosine-protein kinase-like otk from Drosophila persimilis (Fruit fly).